We begin with the raw amino-acid sequence, 303 residues long: Protein UL24 homolog (303 aa).

A compositionally biased stretch (basic and acidic residues) spans 235-249; the sequence is KFRDRTNKKSNDQLR. The interval 235 to 280 is disordered; that stretch reads KFRDRTNKKSNDQLRARQANARPCKKKQHNNKRLRNNRKHGGKVSR. Positions 257 to 277 are enriched in basic residues; the sequence is PCKKKQHNNKRLRNNRKHGGK.

This sequence belongs to the herpesviridae UL24 family.

It localises to the virion. The protein resides in the host cytoplasm. It is found in the host nucleus. Its subcellular location is the host nucleolus. The protein localises to the host Golgi apparatus. Functionally, may participate in nuclear egress of viral particles. Plays a role in the dispersal of several host nucleolar proteins including NCL/nucleolin and NPM1. Since deletion of host NCL/nucleolin negatively impact on nuclear egress, UL24 supposedly acts on this process through its effect on host nucleoli. The chain is Protein UL24 homolog (20) from Saimiri sciureus (Common squirrel monkey).